Here is a 473-residue protein sequence, read N- to C-terminus: Mitochondrial adenyl nucleotide antiporter SLC25A24-B (473 aa).

The segment at 1–173 is regulatory N-terminal domain; that stretch reads MLEQVQKFLL…RYWKHSTVLD (173 aa). Residues 1 to 197 lie on the Mitochondrial intermembrane side of the membrane; the sequence is MLEQVQKFLL…EKKTGQWWKQ (197 aa). EF-hand domains are found at residues 19-54, 55-88, 86-121, and 122-157; these read DSQSRYEELFHKLDVNKDGKVDILELQEGLKAMGME, VGKGAEEKIVAAGDTNKDGHLDFGEFIRYLEEHE, EHEKKMKIAFTSLDKNKDGKIESAEIMNSLKVLGIK, and ISLDHADKILKSMDSDGTLTVDWNEWRDHFLFNPAD. Positions 32, 34, 36, 38, 43, 68, 70, 72, 74, 79, 99, 101, 103, 105, 110, 135, 137, 139, 141, and 146 each coordinate Ca(2+). The tract at residues 159-168 is linker region; the sequence is IQQIIRYWKH. Residues 174–473 are C-terminal transmembrane transporter domain; the sequence is IGDSLTIPDE…YEKMKVQLGI (300 aa). 3 Solcar repeats span residues 192–277, 285–370, and 382–470; these read GQWW…YKKL, LGTA…LKNY, and PGVL…MKVQ. A helical transmembrane segment spans residues 198-215; sequence LMAGGMAGAVSRTGTAPL. The Mitochondrial matrix segment spans residues 216–251; sequence DRLKVMMQVHGSKGNSNIITGLKQMVKEGGIRSLWR. Residues 252–271 form a helical membrane-spanning segment; sequence GNGVNVIKIAPETAMKFWAY. The Mitochondrial intermembrane portion of the chain corresponds to 272 to 294; sequence EQYKKLFTSESGKLGTAERFVAG. The helical transmembrane segment at 295–308 threads the bilayer; it reads SLAGATAQTSIYPM. Residues 309-344 are Mitochondrial matrix-facing; the sequence is EVLKTRLAVGRTGQYSGMFDCAKKIMQKEGIRAFYK. The helical transmembrane segment at 345-364 threads the bilayer; that stretch reads GYIPNILGIIPYAGIDLAIY. Residues 365–387 are Mitochondrial intermembrane-facing; the sequence is ETLKNYWLQNHAKDSANPGVLVL. The helical transmembrane segment at 388–405 threads the bilayer; the sequence is LGCGTASSTCGQLASYPL. At 406–444 the chain is on the mitochondrial matrix side; the sequence is ALIRTRMQAQASIEGAPQLNMGGLFRKIVAKEGFLGLYR. A helical transmembrane segment spans residues 445–464; that stretch reads GIGPNFLKVLPAVSISYVVY. At 465–473 the chain is on the mitochondrial intermembrane side; sequence EKMKVQLGI.

Belongs to the mitochondrial carrier (TC 2.A.29) family. Monomer.

It localises to the mitochondrion inner membrane. The catalysed reaction is Mg(2+)(out) + phosphate(in) + ATP(out) = Mg(2+)(in) + phosphate(out) + ATP(in). It carries out the reaction ADP(out) + phosphate(in) + H(+)(out) = ADP(in) + phosphate(out) + H(+)(in). It catalyses the reaction AMP(out) + phosphate(in) = AMP(in) + phosphate(out). The enzyme catalyses phosphate(in) + ATP(out) + 2 H(+)(out) = phosphate(out) + ATP(in) + 2 H(+)(in). The catalysed reaction is dADP(in) + ADP(out) = dADP(out) + ADP(in). It carries out the reaction Mg(2+)(in) + ADP(out) + ATP(in) + H(+)(out) = Mg(2+)(out) + ADP(in) + ATP(out) + H(+)(in). It catalyses the reaction ADP(out) + diphosphate(in) = ADP(in) + diphosphate(out). The enzyme catalyses dAMP(in) + ADP(out) + H(+)(out) = dAMP(out) + ADP(in) + H(+)(in). The catalysed reaction is 3'-AMP(in) + ADP(out) + H(+)(out) = 3'-AMP(out) + ADP(in) + H(+)(in). It carries out the reaction dAMP(out) + phosphate(in) = dAMP(in) + phosphate(out). It catalyses the reaction 3'-AMP(out) + phosphate(in) = 3'-AMP(in) + phosphate(out). The enzyme catalyses dADP(out) + phosphate(in) + H(+)(out) = dADP(in) + phosphate(out) + H(+)(in). Activated by an increase in cytosolic calcium levels that induce a conformational change of the N-terminal regulatory domain, uncapping the channel and allowing transport. Inhibited by bathophenanthroline, mersalyl, p-hydroxymercuribenzoate, bromcresol purple and tannic acid. Functionally, electroneutral antiporter that mediates the transport of adenyl nucleotides through the inner mitochondrial membrane. Originally identified as an ATP-magnesium/inorganic phosphate antiporter, it also acts as a broad specificity adenyl nucleotide antiporter. By regulating the mitochondrial matrix adenyl nucleotide pool could adapt to changing cellular energetic demands and indirectly regulate adenyl nucleotide-dependent metabolic pathways. The polypeptide is Mitochondrial adenyl nucleotide antiporter SLC25A24-B (slc25a24-b) (Xenopus laevis (African clawed frog)).